The sequence spans 214 residues: tRNA (guanine-N(7)-)-methyltransferase (214 aa).

S-adenosyl-L-methionine-binding residues include Glu44, Glu69, Asp96, and Asp118. Asp118 is an active-site residue. Substrate contacts are provided by residues Lys122, Asp154, and 191–194; that span reads TEYE.

The protein belongs to the class I-like SAM-binding methyltransferase superfamily. TrmB family.

It carries out the reaction guanosine(46) in tRNA + S-adenosyl-L-methionine = N(7)-methylguanosine(46) in tRNA + S-adenosyl-L-homocysteine. Its pathway is tRNA modification; N(7)-methylguanine-tRNA biosynthesis. Functionally, catalyzes the formation of N(7)-methylguanine at position 46 (m7G46) in tRNA. This chain is tRNA (guanine-N(7)-)-methyltransferase, found in Listeria monocytogenes serotype 4a (strain HCC23).